Consider the following 413-residue polypeptide: CinA-like protein (413 aa).

This sequence belongs to the CinA family.

This Geobacter sulfurreducens (strain ATCC 51573 / DSM 12127 / PCA) protein is CinA-like protein.